Here is a 218-residue protein sequence, read N- to C-terminus: MAYDYSASLNPQKALIWRIVHRDNIPWILDNGLHCGNSLVQAENWINIGNPELIGKRAGHPVPVGTGGTLHDYVPFYFTPFSPMLMNIHSGRGGIKRRPNEEIVILVSNLRNVAAHDVPFVFTDSHAYYNWTNYYTSLNSLDQIDWPILQARDFRRDPDDPAKFERYQAEALIWQHCPISLLDGIICYSEEVRLQLEQWLFQRNLTMSVHTRSGWYFS.

The DarT domain maps to 14–217 (ALIWRIVHRD…SVHTRSGWYF (204 aa)). Residues 18–20 (RIV) and Arg-57 each bind NAD(+). Positions 41–59 (QAENWINIGNPELIGKRAG) are NAD(+)-binding element. Arg-57 serves as the catalytic Proton acceptor. The segment at 123-170 (TDSHAYYNWTNYYTSLNSLDQIDWPILQARDFRRDPDDPAKFERYQAE) is ADP-ribosylating turn-turn loop. The active site involves Glu-170.

Belongs to the DarT ADP-ribosyltransferase family. In terms of assembly, interacts with cognate antitoxin DarG (via C-terminus); this heterodimeric complex neutralizes the toxic effect of DarT by preventing ssDNA binding to DarT and consequently inactivating the toxin by direct protein-protein interactions.

It carries out the reaction a thymidine in DNA + NAD(+) = an N-(ADP-alpha-D-ribosyl)-thymidine in DNA + nicotinamide + H(+). Toxic component of the hybrid type II/IV toxin-antitoxin (TA) system DarTG, which plays a crucial role in controlling bacterial growth and bacteriophage infection. ADP-ribosylates ssDNA in the sequence TTT/TCT. In case of phage infection, DarT toxin ADP-ribosylates DNA, which inhibits both viral DNA and RNA synthesis and leads to abortive infection. Its toxic effect is neutralized by cognate antitoxin DarG. May target ssDNA loops during DNA replication, probably modifies thymidine. Wild-type protein cannot be expressed at low levels in the absence of its cognate antitoxin, but a mutant protein (G49D) can be expressed, which slows growth, rapidly inhibits DNA replication, and induces RecA expression and the SOS response. The slow growth phenotype can be suppressed by cognate antitoxin DarG. Has no activity on dsDNA in vitro. In vivo ADP-ribosylates genomic DNA (gDNA). Genetic data strongly suggests ADP-ribosylation by DarT probably generates ssDNA gaps that are repaired by the RecFOR-mediated homologous recombination pathway (RuvAB, RecG) and resolved by RuvC. In some cases these gaps probably migrate into dsDNA, where they are resolved by nucleotide excision repair (NER) detected by UvrAB, excised by UvrC, removed by UvrD, and repaired by Pol I and ligase. Other pathways may also be involved in ADP-ribosylation removal from DNA. The polypeptide is DNA ADP-ribosyl transferase (Escherichia coli O127:H6 (strain E2348/69 / EPEC)).